Here is a 156-residue protein sequence, read N- to C-terminus: Dynein 16 kDa light chain, flagellar outer arm (156 aa).

A Thioredoxin domain is found at 2 to 116 (AAGLPPVQYS…LNQQVLSLTP (115 aa)). Cysteines 37 and 40 form a disulfide.

Consists of at least 3 heavy chains (alpha, beta and gamma), 2 intermediate chains and 8 light chains.

It is found in the cell projection. The protein localises to the cilium. It localises to the flagellum. The protein resides in the cytoplasm. Its subcellular location is the cytoskeleton. It is found in the flagellum axoneme. In terms of biological role, may be involved in regulating the redox state of functionally important thiol groups within dynein. The chain is Dynein 16 kDa light chain, flagellar outer arm from Chlamydomonas reinhardtii (Chlamydomonas smithii).